The following is a 372-amino-acid chain: Phenylalanine--tRNA ligase alpha subunit (372 aa).

Position 276 (E276) interacts with Mg(2+).

The protein belongs to the class-II aminoacyl-tRNA synthetase family. Phe-tRNA synthetase alpha subunit type 1 subfamily. As to quaternary structure, tetramer of two alpha and two beta subunits. Requires Mg(2+) as cofactor.

The protein localises to the cytoplasm. The catalysed reaction is tRNA(Phe) + L-phenylalanine + ATP = L-phenylalanyl-tRNA(Phe) + AMP + diphosphate + H(+). In Thermobifida fusca (strain YX), this protein is Phenylalanine--tRNA ligase alpha subunit.